The sequence spans 257 residues: 3-methyl-2-oxobutanoate hydroxymethyltransferase (257 aa).

2 residues coordinate Mg(2+): aspartate 42 and aspartate 86. 3-methyl-2-oxobutanoate is bound by residues 42 to 43, aspartate 86, and lysine 116; that span reads DS. Residue glutamate 118 coordinates Mg(2+). The active-site Proton acceptor is the glutamate 185.

Belongs to the PanB family. In terms of assembly, homodecamer; pentamer of dimers. Mg(2+) is required as a cofactor.

The protein resides in the cytoplasm. The catalysed reaction is 3-methyl-2-oxobutanoate + (6R)-5,10-methylene-5,6,7,8-tetrahydrofolate + H2O = 2-dehydropantoate + (6S)-5,6,7,8-tetrahydrofolate. It participates in cofactor biosynthesis; (R)-pantothenate biosynthesis; (R)-pantoate from 3-methyl-2-oxobutanoate: step 1/2. Functionally, catalyzes the reversible reaction in which hydroxymethyl group from 5,10-methylenetetrahydrofolate is transferred onto alpha-ketoisovalerate to form ketopantoate. The sequence is that of 3-methyl-2-oxobutanoate hydroxymethyltransferase from Prochlorococcus marinus (strain MIT 9301).